We begin with the raw amino-acid sequence, 340 residues long: Ketol-acid reductoisomerase (NADP(+)) (340 aa).

The KARI N-terminal Rossmann domain occupies 3–183 (LSVYYDKDCN…GGGRTGIIET (181 aa)). NADP(+) is bound by residues 26–29 (FGSQ), Ser-54, and 84–87 (DELQ). His-109 is a catalytic residue. An NADP(+)-binding site is contributed by Gly-135. Residues 184–329 (TFKDETETDL…ERLRAMMPWI (146 aa)) enclose the KARI C-terminal knotted domain. Positions 192, 196, 228, and 232 each coordinate Mg(2+). Ser-253 lines the substrate pocket.

This sequence belongs to the ketol-acid reductoisomerase family. Requires Mg(2+) as cofactor.

It catalyses the reaction (2R)-2,3-dihydroxy-3-methylbutanoate + NADP(+) = (2S)-2-acetolactate + NADPH + H(+). The catalysed reaction is (2R,3R)-2,3-dihydroxy-3-methylpentanoate + NADP(+) = (S)-2-ethyl-2-hydroxy-3-oxobutanoate + NADPH + H(+). It participates in amino-acid biosynthesis; L-isoleucine biosynthesis; L-isoleucine from 2-oxobutanoate: step 2/4. It functions in the pathway amino-acid biosynthesis; L-valine biosynthesis; L-valine from pyruvate: step 2/4. Functionally, involved in the biosynthesis of branched-chain amino acids (BCAA). Catalyzes an alkyl-migration followed by a ketol-acid reduction of (S)-2-acetolactate (S2AL) to yield (R)-2,3-dihydroxy-isovalerate. In the isomerase reaction, S2AL is rearranged via a Mg-dependent methyl migration to produce 3-hydroxy-3-methyl-2-ketobutyrate (HMKB). In the reductase reaction, this 2-ketoacid undergoes a metal-dependent reduction by NADPH to yield (R)-2,3-dihydroxy-isovalerate. The chain is Ketol-acid reductoisomerase (NADP(+)) from Wolinella succinogenes (strain ATCC 29543 / DSM 1740 / CCUG 13145 / JCM 31913 / LMG 7466 / NCTC 11488 / FDC 602W) (Vibrio succinogenes).